The sequence spans 551 residues: Malate synthase, glyoxysomal (551 aa).

Arg-174 (proton acceptor) is an active-site residue. Asp-458 acts as the Proton donor in catalysis.

This sequence belongs to the malate synthase family.

It is found in the glyoxysome. The catalysed reaction is glyoxylate + acetyl-CoA + H2O = (S)-malate + CoA + H(+). It participates in carbohydrate metabolism; glyoxylate cycle; (S)-malate from isocitrate: step 2/2. This is Malate synthase, glyoxysomal (PMS1) from Candida tropicalis (Yeast).